The primary structure comprises 253 residues: Transmembrane protein 51 (253 aa).

The next 2 helical transmembrane spans lie at 17–37 (IGLG…VPGF) and 65–85 (VAYV…CLSI). 2 disordered regions span residues 93–133 (QGED…YVPS) and 164–253 (LTGL…RPPD). Residues 113-124 (EDSQEEEEEDEE) are compositionally biased toward acidic residues. Ser-115 carries the phosphoserine modification. Polar residues predominate over residues 164 to 176 (LTGLDETTPTSTR). Ser-182 and Ser-192 each carry phosphoserine. Residues 194–205 (LAKRLKPLKVRR) show a composition bias toward basic residues. Residues 206–217 (IKSEKLHLKDFR) show a composition bias toward basic and acidic residues. A compositionally biased stretch (pro residues) spans 224 to 238 (NVPPPSIEPLTPPPQ). Residues 242 to 253 (VQEKAPDTRPPD) are compositionally biased toward basic and acidic residues.

It localises to the membrane. The chain is Transmembrane protein 51 (TMEM51) from Homo sapiens (Human).